The sequence spans 272 residues: MSAQVATRRLTQADLAKLYQAGEKIAQFTCYDASFARLLDGAGVDSILIGDSLGNVIQGHDTTLPVTVADIAYHTAAVKRGCDRAFIVADMPFGSYQESPEQAFRNAATLMAAGAQMVKLEGGADMAPTVRFMVSRGIPVCGHIGLTPQSVHVLGGYKVQGKGEAAAQRLKDDAMALKAAGATMLLLEAIPATLAAEVTAMTGVITIGIGAGKDCSGQVMVLHDAFDIPPGKKAKFVKNFMEGASSIHDAACRAIAAVKDGSYPGPEHTYSA.

The Mg(2+) site is built by aspartate 51 and aspartate 90. 3-methyl-2-oxobutanoate-binding positions include 51–52 (DS), aspartate 90, and lysine 119. Glutamate 121 contributes to the Mg(2+) binding site. Glutamate 188 (proton acceptor) is an active-site residue.

This sequence belongs to the PanB family. In terms of assembly, homodecamer; pentamer of dimers. It depends on Mg(2+) as a cofactor.

The protein resides in the cytoplasm. It catalyses the reaction 3-methyl-2-oxobutanoate + (6R)-5,10-methylene-5,6,7,8-tetrahydrofolate + H2O = 2-dehydropantoate + (6S)-5,6,7,8-tetrahydrofolate. Its pathway is cofactor biosynthesis; (R)-pantothenate biosynthesis; (R)-pantoate from 3-methyl-2-oxobutanoate: step 1/2. In terms of biological role, catalyzes the reversible reaction in which hydroxymethyl group from 5,10-methylenetetrahydrofolate is transferred onto alpha-ketoisovalerate to form ketopantoate. The protein is 3-methyl-2-oxobutanoate hydroxymethyltransferase of Dechloromonas aromatica (strain RCB).